A 122-amino-acid chain; its full sequence is Large ribosomal subunit protein bL12 (122 aa).

It belongs to the bacterial ribosomal protein bL12 family. As to quaternary structure, homodimer. Part of the ribosomal stalk of the 50S ribosomal subunit. Forms a multimeric L10(L12)X complex, where L10 forms an elongated spine to which 2 to 4 L12 dimers bind in a sequential fashion. Binds GTP-bound translation factors.

Functionally, forms part of the ribosomal stalk which helps the ribosome interact with GTP-bound translation factors. Is thus essential for accurate translation. In Blochmanniella pennsylvanica (strain BPEN), this protein is Large ribosomal subunit protein bL12.